Reading from the N-terminus, the 146-residue chain is Anti-sigma F factor (146 aa).

The protein belongs to the anti-sigma-factor family.

The enzyme catalyses L-seryl-[protein] + ATP = O-phospho-L-seryl-[protein] + ADP + H(+). The catalysed reaction is L-threonyl-[protein] + ATP = O-phospho-L-threonyl-[protein] + ADP + H(+). Functionally, binds to sigma F and blocks its ability to form an RNA polymerase holoenzyme (E-sigma F). Phosphorylates SpoIIAA on a serine residue. This phosphorylation may enable SpoIIAA to act as an anti-anti-sigma factor that counteracts SpoIIAB and thus releases sigma F from inhibition. In Bacillus subtilis (strain 168), this protein is Anti-sigma F factor (spoIIAB).